Here is a 375-residue protein sequence, read N- to C-terminus: 4-hydroxy-3-methylbut-2-en-1-yl diphosphate synthase (flavodoxin) (375 aa).

Cysteine 268, cysteine 271, cysteine 303, and glutamate 310 together coordinate [4Fe-4S] cluster.

Belongs to the IspG family. Requires [4Fe-4S] cluster as cofactor.

It catalyses the reaction (2E)-4-hydroxy-3-methylbut-2-enyl diphosphate + oxidized [flavodoxin] + H2O + 2 H(+) = 2-C-methyl-D-erythritol 2,4-cyclic diphosphate + reduced [flavodoxin]. It participates in isoprenoid biosynthesis; isopentenyl diphosphate biosynthesis via DXP pathway; isopentenyl diphosphate from 1-deoxy-D-xylulose 5-phosphate: step 5/6. Its function is as follows. Converts 2C-methyl-D-erythritol 2,4-cyclodiphosphate (ME-2,4cPP) into 1-hydroxy-2-methyl-2-(E)-butenyl 4-diphosphate. The polypeptide is 4-hydroxy-3-methylbut-2-en-1-yl diphosphate synthase (flavodoxin) (Bacillus velezensis (strain DSM 23117 / BGSC 10A6 / LMG 26770 / FZB42) (Bacillus amyloliquefaciens subsp. plantarum)).